A 401-amino-acid polypeptide reads, in one-letter code: Flagellin D (401 aa).

The protein belongs to the bacterial flagellin family.

It localises to the secreted. The protein resides in the bacterial flagellum. Functionally, flagellin is the subunit protein which polymerizes to form the filaments of bacterial flagella. The chain is Flagellin D (flaD) from Rhizobium meliloti (strain 1021) (Ensifer meliloti).